The primary structure comprises 257 residues: Probable transcriptional regulatory protein SRU_2667 (257 aa).

Residues 1 to 15 (MAGHTRKWAKVKRKK) show a composition bias toward basic residues. The segment at 1-25 (MAGHTRKWAKVKRKKQKDDRRKSKV) is disordered.

The protein belongs to the TACO1 family.

The protein resides in the cytoplasm. This chain is Probable transcriptional regulatory protein SRU_2667, found in Salinibacter ruber (strain DSM 13855 / M31).